A 244-amino-acid polypeptide reads, in one-letter code: Glycoprotein 3 (244 aa).

In terms of biological role, although P4 acquires its capsid proteins from helper phages such as P2, it possesses the ability to assemble capsids that are only one-third the size of the helper's capsid. The sid protein is responsible for the assembly of P4-sized shells. It forms a P4-specific scaffold with icosahedral symmetry on the outside of the procapsid-like particles. The chain is Glycoprotein 3 (sid) from Enterobacteria phage P4 (Bacteriophage P4).